Consider the following 181-residue polypeptide: Large ribosomal subunit protein uL5 (181 aa).

It belongs to the universal ribosomal protein uL5 family. Part of the 50S ribosomal subunit; part of the 5S rRNA/L5/L18/L25 subcomplex. Contacts the 5S rRNA and the P site tRNA. Forms a bridge to the 30S subunit in the 70S ribosome.

This is one of the proteins that bind and probably mediate the attachment of the 5S RNA into the large ribosomal subunit, where it forms part of the central protuberance. In the 70S ribosome it contacts protein S13 of the 30S subunit (bridge B1b), connecting the 2 subunits; this bridge is implicated in subunit movement. Contacts the P site tRNA; the 5S rRNA and some of its associated proteins might help stabilize positioning of ribosome-bound tRNAs. This Sulfurovum sp. (strain NBC37-1) protein is Large ribosomal subunit protein uL5.